Reading from the N-terminus, the 495-residue chain is Glutamyl-tRNA(Gln) amidotransferase subunit A (495 aa).

Catalysis depends on charge relay system residues K78 and S158. The active-site Acyl-ester intermediate is the S182.

Belongs to the amidase family. GatA subfamily. In terms of assembly, heterotrimer of A, B and C subunits.

The catalysed reaction is L-glutamyl-tRNA(Gln) + L-glutamine + ATP + H2O = L-glutaminyl-tRNA(Gln) + L-glutamate + ADP + phosphate + H(+). In terms of biological role, allows the formation of correctly charged Gln-tRNA(Gln) through the transamidation of misacylated Glu-tRNA(Gln) in organisms which lack glutaminyl-tRNA synthetase. The reaction takes place in the presence of glutamine and ATP through an activated gamma-phospho-Glu-tRNA(Gln). In Dinoroseobacter shibae (strain DSM 16493 / NCIMB 14021 / DFL 12), this protein is Glutamyl-tRNA(Gln) amidotransferase subunit A.